A 200-amino-acid polypeptide reads, in one-letter code: Holliday junction branch migration complex subunit RuvA (200 aa).

A domain I region spans residues 1–64 (MYAYFRGELI…EDLMQLYGFI (64 aa)). Residues 65 to 143 (EEEERQLFLL…KLQQTRPGKT (79 aa)) form a domain II region. The segment at 144 to 154 (AGAGSVASLSE) is flexible linker. The tract at residues 154-200 (EDALQALMTLGFSRASAQQAVTRALLSAENPGVEDIVREALQNIRNH) is domain III.

The protein belongs to the RuvA family. As to quaternary structure, homotetramer. Forms an RuvA(8)-RuvB(12)-Holliday junction (HJ) complex. HJ DNA is sandwiched between 2 RuvA tetramers; dsDNA enters through RuvA and exits via RuvB. An RuvB hexamer assembles on each DNA strand where it exits the tetramer. Each RuvB hexamer is contacted by two RuvA subunits (via domain III) on 2 adjacent RuvB subunits; this complex drives branch migration. In the full resolvosome a probable DNA-RuvA(4)-RuvB(12)-RuvC(2) complex forms which resolves the HJ.

It is found in the cytoplasm. The RuvA-RuvB-RuvC complex processes Holliday junction (HJ) DNA during genetic recombination and DNA repair, while the RuvA-RuvB complex plays an important role in the rescue of blocked DNA replication forks via replication fork reversal (RFR). RuvA specifically binds to HJ cruciform DNA, conferring on it an open structure. The RuvB hexamer acts as an ATP-dependent pump, pulling dsDNA into and through the RuvAB complex. HJ branch migration allows RuvC to scan DNA until it finds its consensus sequence, where it cleaves and resolves the cruciform DNA. The sequence is that of Holliday junction branch migration complex subunit RuvA from Prosthecochloris aestuarii (strain DSM 271 / SK 413).